The primary structure comprises 282 residues: ATP synthase gamma chain (282 aa).

It belongs to the ATPase gamma chain family. As to quaternary structure, F-type ATPases have 2 components, CF(1) - the catalytic core - and CF(0) - the membrane proton channel. CF(1) has five subunits: alpha(3), beta(3), gamma(1), delta(1), epsilon(1). CF(0) has three main subunits: a, b and c.

Its subcellular location is the cell membrane. Its function is as follows. Produces ATP from ADP in the presence of a proton gradient across the membrane. The gamma chain is believed to be important in regulating ATPase activity and the flow of protons through the CF(0) complex. This Clostridium botulinum (strain Kyoto / Type A2) protein is ATP synthase gamma chain.